The following is an 88-amino-acid chain: Cell division topological specificity factor (88 aa).

Belongs to the MinE family.

Functionally, prevents the cell division inhibition by proteins MinC and MinD at internal division sites while permitting inhibition at polar sites. This ensures cell division at the proper site by restricting the formation of a division septum at the midpoint of the long axis of the cell. The chain is Cell division topological specificity factor from Escherichia coli (strain SMS-3-5 / SECEC).